Here is a 500-residue protein sequence, read N- to C-terminus: Cytochrome P450 71B26 (500 aa).

Residues 1-21 (MDSIWILSLLFFIIFLLLAAF) traverse the membrane as a helical segment. A heme-binding site is contributed by cysteine 440.

It belongs to the cytochrome P450 family. Heme serves as cofactor.

The protein localises to the membrane. This is Cytochrome P450 71B26 (CYP71B26) from Arabidopsis thaliana (Mouse-ear cress).